Here is a 60-residue protein sequence, read N- to C-terminus: Probable UDP-arabinopyranose mutase 1 (60 aa).

This sequence belongs to the RGP family. Homopentamer or homohexamer. It depends on Mn(2+) as a cofactor. Requires Mg(2+) as cofactor.

The protein localises to the secreted. It localises to the cell wall. The protein resides in the cell junction. It is found in the plasmodesma. Its subcellular location is the golgi apparatus. It catalyses the reaction UDP-beta-L-arabinofuranose = UDP-beta-L-arabinopyranose. Its function is as follows. Probable UDP-L-arabinose mutase involved in the biosynthesis of cell wall non-cellulosic polysaccharides. The sequence is that of Probable UDP-arabinopyranose mutase 1 from Phoenix dactylifera (Date palm).